The chain runs to 67 residues: Beta-defensin 123 (67 aa).

Residues 1–20 form the signal peptide; sequence MKLLLLTLTVLLLLSQLTPG. Cystine bridges form between C25/C52, C32/C46, and C36/C53.

The protein belongs to the beta-defensin family. In terms of tissue distribution, abundant expression in the male reproductive tract only. Expressed abundantly in testis, while expression in epididymis decreased gradually from caput to cauda.

The protein resides in the secreted. Has antibacterial activity. The protein is Beta-defensin 123 (DEFB123) of Macaca mulatta (Rhesus macaque).